Consider the following 276-residue polypeptide: 1-(5-phosphoribosyl)-5-[(5-phosphoribosylamino)methylideneamino] imidazole-4-carboxamide isomerase (276 aa).

Belongs to the HisA/HisF family.

It is found in the cytoplasm. It carries out the reaction 1-(5-phospho-beta-D-ribosyl)-5-[(5-phospho-beta-D-ribosylamino)methylideneamino]imidazole-4-carboxamide = 5-[(5-phospho-1-deoxy-D-ribulos-1-ylimino)methylamino]-1-(5-phospho-beta-D-ribosyl)imidazole-4-carboxamide. It functions in the pathway amino-acid biosynthesis; L-histidine biosynthesis; L-histidine from 5-phospho-alpha-D-ribose 1-diphosphate: step 4/9. The sequence is that of 1-(5-phosphoribosyl)-5-[(5-phosphoribosylamino)methylideneamino] imidazole-4-carboxamide isomerase (HIS6) from Debaryomyces hansenii (strain ATCC 36239 / CBS 767 / BCRC 21394 / JCM 1990 / NBRC 0083 / IGC 2968) (Yeast).